Consider the following 299-residue polypeptide: MPT51/MPB51 antigen (299 aa).

The N-terminal stretch at 1 to 26 (MKGRSALLRALWIAALSFGLGGVAVA) is a signal peptide.

The protein belongs to the mycobacterial A85 antigen family. In terms of assembly, homodimer.

It localises to the secreted. Its function is as follows. May have a role in host tissue attachment, whereby ligands may include the serum protein fibronectin and small sugars. This Mycobacterium bovis (strain ATCC BAA-935 / AF2122/97) protein is MPT51/MPB51 antigen (mpt51).